The following is a 519-amino-acid chain: Ribonuclease Y 1 (519 aa).

A helical membrane pass occupies residues 3–23 (VPIVILAIIAIVVGVVGGYYL). Over residues 92–120 (QREETLDRKDNSLEKRENSLNRRDKKLSA) the composition is skewed to basic and acidic residues. Residues 92–124 (QREETLDRKDNSLEKRENSLNRRDKKLSAEEQN) are disordered. One can recognise a KH domain in the interval 209–272 (TITVVTLPND…EVAKIALEKL (64 aa)). An HD domain is found at 335-428 (ALAHSIEVAK…VSTADIISAT (94 aa)).

It belongs to the RNase Y family.

The protein resides in the cell membrane. Its function is as follows. Endoribonuclease that initiates mRNA decay. This chain is Ribonuclease Y 1, found in Levilactobacillus brevis (strain ATCC 367 / BCRC 12310 / CIP 105137 / JCM 1170 / LMG 11437 / NCIMB 947 / NCTC 947) (Lactobacillus brevis).